The primary structure comprises 431 residues: 3-phosphoshikimate 1-carboxyvinyltransferase (431 aa).

Residues Lys-26, Ser-27, and Arg-31 each coordinate 3-phosphoshikimate. Lys-26 provides a ligand contact to phosphoenolpyruvate. Residues Gly-100 and Arg-129 each coordinate phosphoenolpyruvate. The 3-phosphoshikimate site is built by Ser-175, Ser-176, Gln-177, Asp-308, and Gln-335. Residue Gln-177 coordinates phosphoenolpyruvate. Residue Asp-308 is the Proton acceptor of the active site. Residues Arg-339, Arg-381, and Lys-412 each contribute to the phosphoenolpyruvate site.

It belongs to the EPSP synthase family. As to quaternary structure, monomer.

It localises to the cytoplasm. It catalyses the reaction 3-phosphoshikimate + phosphoenolpyruvate = 5-O-(1-carboxyvinyl)-3-phosphoshikimate + phosphate. Its pathway is metabolic intermediate biosynthesis; chorismate biosynthesis; chorismate from D-erythrose 4-phosphate and phosphoenolpyruvate: step 6/7. Functionally, catalyzes the transfer of the enolpyruvyl moiety of phosphoenolpyruvate (PEP) to the 5-hydroxyl of shikimate-3-phosphate (S3P) to produce enolpyruvyl shikimate-3-phosphate and inorganic phosphate. The protein is 3-phosphoshikimate 1-carboxyvinyltransferase of Opitutus terrae (strain DSM 11246 / JCM 15787 / PB90-1).